The primary structure comprises 510 residues: ATP synthase subunit alpha (510 aa).

169–176 (GDRQTGKT) is a binding site for ATP.

The protein belongs to the ATPase alpha/beta chains family. In terms of assembly, F-type ATPases have 2 components, CF(1) - the catalytic core - and CF(0) - the membrane proton channel. CF(1) has five subunits: alpha(3), beta(3), gamma(1), delta(1), epsilon(1). CF(0) has three main subunits: a(1), b(2) and c(9-12). The alpha and beta chains form an alternating ring which encloses part of the gamma chain. CF(1) is attached to CF(0) by a central stalk formed by the gamma and epsilon chains, while a peripheral stalk is formed by the delta and b chains.

It localises to the cell inner membrane. The enzyme catalyses ATP + H2O + 4 H(+)(in) = ADP + phosphate + 5 H(+)(out). Produces ATP from ADP in the presence of a proton gradient across the membrane. The alpha chain is a regulatory subunit. The sequence is that of ATP synthase subunit alpha from Methylobacterium radiotolerans (strain ATCC 27329 / DSM 1819 / JCM 2831 / NBRC 15690 / NCIMB 10815 / 0-1).